Here is a 175-residue protein sequence, read N- to C-terminus: Adenine phosphoribosyltransferase (175 aa).

Belongs to the purine/pyrimidine phosphoribosyltransferase family. As to quaternary structure, homodimer.

The protein resides in the cytoplasm. The catalysed reaction is AMP + diphosphate = 5-phospho-alpha-D-ribose 1-diphosphate + adenine. The protein operates within purine metabolism; AMP biosynthesis via salvage pathway; AMP from adenine: step 1/1. In terms of biological role, catalyzes a salvage reaction resulting in the formation of AMP, that is energically less costly than de novo synthesis. The protein is Adenine phosphoribosyltransferase of Francisella tularensis subsp. holarctica (strain FTNF002-00 / FTA).